The following is a 123-amino-acid chain: MAGRSGDPDEELLRAVRIIKTLYQSNPYPSPAGTRQARKNRRRRWRARQRQIHSISERILSACLGRPAEPVPFQLPPLEGLSLDCSKDGGTSGTQQPQGTETGVGRPQVLVEPPVVLGSGTKE.

Residue S5 is modified to Phosphoserine; by host CK2. The interval 18–26 is homomultimerization; it reads IIKTLYQSN. Disordered stretches follow at residues 24-50 and 79-123; these read QSNPYPSPAGTRQARKNRRRRWRARQR and EGLS…GTKE. The Nuclear localization signal and RNA-binding (RRE) motif lies at 34–50; sequence TRQARKNRRRRWRARQR. Over residues 36-50 the composition is skewed to basic residues; it reads QARKNRRRRWRARQR. The Nuclear export signal and binding to XPO1 motif lies at 73-84; it reads FQLPPLEGLSLD. S92 bears the Phosphoserine; by host mark. The span at 93–105 shows a compositional bias: low complexity; it reads GTQQPQGTETGVG.

The protein belongs to the HIV-1 REV protein family. Homomultimer; when bound to the RRE. Multimeric assembly is essential for activity and may involve XPO1. Binds to human KPNB1, XPO1, TNPO1, RANBP5 and IPO7. Interacts with the viral Integrase. Interacts with human KHDRBS1. Interacts with human NAP1; this interaction decreases Rev multimerization and stimulates its activity. Interacts with human DEAD-box helicases DDX3 and DDX24; these interactions may serve for viral RNA export to the cytoplasm and packaging, respectively. Interacts with human PSIP1; this interaction may inhibit HIV-1 DNA integration by promoting dissociation of the Integrase-LEDGF/p75 complex. Post-translationally, asymmetrically arginine dimethylated at one site by host PRMT6. Methylation impairs the RNA-binding activity and export of viral RNA from the nucleus to the cytoplasm. In terms of processing, phosphorylated by protein kinase CK2. Presence of, and maybe binding to the N-terminus of the regulatory beta subunit of CK2 is necessary for CK2-mediated Rev's phosphorylation.

It is found in the host nucleus. It localises to the host nucleolus. The protein localises to the host cytoplasm. Escorts unspliced or incompletely spliced viral pre-mRNAs (late transcripts) out of the nucleus of infected cells. These pre-mRNAs carry a recognition sequence called Rev responsive element (RRE) located in the env gene, that is not present in fully spliced viral mRNAs (early transcripts). This function is essential since most viral proteins are translated from unspliced or partially spliced pre-mRNAs which cannot exit the nucleus by the pathway used by fully processed cellular mRNAs. Rev itself is translated from a fully spliced mRNA that readily exits the nucleus. Rev's nuclear localization signal (NLS) binds directly to KPNB1/Importin beta-1 without previous binding to KPNA1/Importin alpha-1. KPNB1 binds to the GDP bound form of RAN (Ran-GDP) and targets Rev to the nucleus. In the nucleus, the conversion from Ran-GDP to Ran-GTP dissociates Rev from KPNB1 and allows Rev's binding to the RRE in viral pre-mRNAs. Rev multimerization on the RRE via cooperative assembly exposes its nuclear export signal (NES) to the surface. Rev can then form a complex with XPO1/CRM1 and Ran-GTP, leading to nuclear export of the complex. Conversion from Ran-GTP to Ran-GDP mediates dissociation of the Rev/RRE/XPO1/RAN complex, so that Rev can return to the nucleus for a subsequent round of export. Beside KPNB1, also seems to interact with TNPO1/Transportin-1, RANBP5/IPO5 and IPO7/RANBP7 for nuclear import. The nucleoporin-like HRB/RIP is an essential cofactor that probably indirectly interacts with Rev to release HIV RNAs from the perinuclear region to the cytoplasm. The sequence is that of Protein Rev from Human immunodeficiency virus type 1 group M subtype G (isolate 92NG083) (HIV-1).